Here is a 430-residue protein sequence, read N- to C-terminus: Glutamate-1-semialdehyde 2,1-aminomutase (430 aa).

Position 267 is an N6-(pyridoxal phosphate)lysine (lysine 267).

Belongs to the class-III pyridoxal-phosphate-dependent aminotransferase family. HemL subfamily. In terms of assembly, homodimer. Requires pyridoxal 5'-phosphate as cofactor.

The protein resides in the cytoplasm. It catalyses the reaction (S)-4-amino-5-oxopentanoate = 5-aminolevulinate. It participates in porphyrin-containing compound metabolism; protoporphyrin-IX biosynthesis; 5-aminolevulinate from L-glutamyl-tRNA(Glu): step 2/2. The polypeptide is Glutamate-1-semialdehyde 2,1-aminomutase (Thermomicrobium roseum (strain ATCC 27502 / DSM 5159 / P-2)).